We begin with the raw amino-acid sequence, 241 residues long: GTP cyclohydrolase 1 type 2 homolog (241 aa).

Positions 62, 63, 101, 207, and 211 each coordinate a divalent metal cation.

The protein belongs to the GTP cyclohydrolase I type 2/NIF3 family. Homohexamer.

The chain is GTP cyclohydrolase 1 type 2 homolog from Campylobacter jejuni subsp. jejuni serotype O:2 (strain ATCC 700819 / NCTC 11168).